Reading from the N-terminus, the 574-residue chain is Enolase 4 (574 aa).

Over residues 165–175 the composition is skewed to basic and acidic residues; sequence EKERRQMEREA. A disordered region spans residues 165–221; it reads EKERRQMEREASPMPLQPEPSPVTSPAPGKKKGSGKGKKAAVVEKPIPPEETPEAVV. The span at 179-189 shows a compositional bias: pro residues; that stretch reads PLQPEPSPVTS. The segment covering 193-203 has biased composition (basic residues); it reads GKKKGSGKGKK. Substrate is bound at residue glutamate 287. The Proton acceptor role is filled by lysine 467. Position 518 (lysine 518) interacts with substrate.

This sequence belongs to the enolase family.

It carries out the reaction (2R)-2-phosphoglycerate = phosphoenolpyruvate + H2O. It functions in the pathway carbohydrate degradation; glycolysis; pyruvate from D-glyceraldehyde 3-phosphate: step 4/5. In Xenopus tropicalis (Western clawed frog), this protein is Enolase 4 (eno4).